The sequence spans 744 residues: Adenosylcobalamin-dependent ribonucleoside-triphosphate reductase (744 aa).

Cysteines 120 and 424 form a disulfide. The segment at 148-159 (SMPFSFLFDQLM) is effector region-1. Residues 169-318 (VDDNINQIPQ…ICNLIGKTVV (150 aa)) are effector region-2. Residues cysteine 413 and glutamate 415 contribute to the active site. The adenosylcobalamin-binding-1 stretch occupies residues 570-631 (FHYAGYLIQR…SKNFASAGTV (62 aa)). The adenosylcobalamin-binding-2 stretch occupies residues 690–729 (LKQAPKEPINKKAYEDRVAMITGDVKEVFENQNKDQKGLE).

Belongs to the class II ribonucleoside-triphosphate reductase family. Monomer. It depends on adenosylcob(III)alamin as a cofactor.

The catalysed reaction is a 2'-deoxyribonucleoside 5'-triphosphate + [thioredoxin]-disulfide + H2O = a ribonucleoside 5'-triphosphate + [thioredoxin]-dithiol. Its activity is regulated as follows. Allosterically regulated by ATP and dNTP. This Lactobacillus helveticus (strain DPC 4571) protein is Adenosylcobalamin-dependent ribonucleoside-triphosphate reductase (rtpR).